The sequence spans 343 residues: Heat-inducible transcription repressor HrcA (343 aa).

This sequence belongs to the HrcA family.

In terms of biological role, negative regulator of class I heat shock genes (grpE-dnaK-dnaJ and groELS operons). Prevents heat-shock induction of these operons. This Mycolicibacterium smegmatis (strain ATCC 700084 / mc(2)155) (Mycobacterium smegmatis) protein is Heat-inducible transcription repressor HrcA.